Here is a 336-residue protein sequence, read N- to C-terminus: MDIIIVGFGAIGKGIAKVLYDKKDYLKKNYEEFKVVAITDSSGAAIDEDGLDLLKAIEVKEKTGKIKNYPEKGREMSSIDVIKEVDADVVVEVTPSNLETGDPAKTHILESFKNKKHVVTANKGPLALCYKELIEEAKKHGVIFRHEASVGGAMPIINLAKETLAGNEILSIRGILNGTTNYILTKMEKEGLDFETALKEAKELGIAETDPTQDIEGLDTAAKIVILANSIMGMNKTIKDVKVKGISRITPEALFLANKRGYTIKLIGQIKDGYLIVEPMLVPIDSPLNVKGTLNVAMFETDLAKEVVVVGRGAGPIETASAILSDLIHIYNSTKK.

Phenylalanine 8 lines the NADPH pocket. Alanine 10, isoleucine 11, and threonine 94 together coordinate NAD(+). 3 residues coordinate NADPH: isoleucine 11, threonine 94, and lysine 123. Residues isoleucine 11, threonine 94, and lysine 123 each coordinate NADP(+). 3 residues coordinate Na(+): glutamate 147, valine 150, and glycine 152. 2 residues coordinate NADP(+): glycine 205 and glutamate 208. Residues glutamate 208 and aspartate 219 each contribute to the L-homoserine site. The active-site Proton donor is the lysine 223. An NADPH-binding site is contributed by glycine 315. Glycine 315 is a binding site for NAD(+). Glycine 315 is a binding site for NADP(+).

The protein belongs to the homoserine dehydrogenase family. Requires a metal cation as cofactor.

The catalysed reaction is L-homoserine + NADP(+) = L-aspartate 4-semialdehyde + NADPH + H(+). The enzyme catalyses L-homoserine + NAD(+) = L-aspartate 4-semialdehyde + NADH + H(+). It participates in amino-acid biosynthesis; L-methionine biosynthesis via de novo pathway; L-homoserine from L-aspartate: step 3/3. The protein operates within amino-acid biosynthesis; L-threonine biosynthesis; L-threonine from L-aspartate: step 3/5. Catalyzes the conversion of L-aspartate-beta-semialdehyde (L-Asa) to L-homoserine (L-Hse), the third step in the biosynthesis of threonine and methionine from aspartate. In Methanocaldococcus jannaschii (strain ATCC 43067 / DSM 2661 / JAL-1 / JCM 10045 / NBRC 100440) (Methanococcus jannaschii), this protein is Homoserine dehydrogenase (hom).